The primary structure comprises 612 residues: Chloride intracellular channel protein 6 (612 aa).

Residues 1–373 (MAEATEPKEV…NGPASEEGDL (373 aa)) are disordered. Residues 34–51 (LEGREASEGAAEAPRDLG) show a composition bias toward basic and acidic residues. Residue serine 40 is modified to Phosphoserine. The segment covering 84–96 (PGTETPGTSGAPG) has biased composition (low complexity). The segment covering 120-129 (QQVQGTSSGL) has biased composition (polar residues). The span at 140 to 153 (EDARREPEDPKASE) shows a compositional bias: basic and acidic residues. The segment covering 208 to 223 (SSPQPQDEAIEIAAAE) has biased composition (low complexity). Basic and acidic residues-rich tracts occupy residues 240–264 (AKGE…RVDS) and 275–303 (EEAR…RPES). Residues serine 264, serine 303, and serine 321 each carry the phosphoserine modification. 2 stretches are compositionally biased toward basic and acidic residues: residues 325-335 (EEAKSTGHEES) and 354-364 (ELGRVNGRREN). Position 368 is a phosphoserine (serine 368). The G-site motif lies at 395 to 398 (CPFS). The helical transmembrane segment at 397 to 417 (FSQRLFMILWLKGVIFNVTTV) threads the bilayer. Residues 441-612 (DGEVKTDVNK…AYSDAAKRMK (172 aa)) enclose the GST C-terminal domain.

This sequence belongs to the chloride channel CLIC family. Monomer (soluble state). Interacts with dopamine receptors DRD2, DRD3 and DRD4. In terms of processing, phosphorylated. As to expression, predominantly expressed in brain, pituitary and stomach. In adult brain, it is restricted to the choroid plexus, the striatal proliferative subventricular zone and the cerebellum where it colocalizes with the D(3)R in the Purkinje cells of the lobules IX and X.

It is found in the cytoplasm. It localises to the cell membrane. The enzyme catalyses chloride(in) = chloride(out). Channel activity is redox- and pH-regulated. Inhibited by IAA-94. In terms of biological role, in the soluble state, catalyzes glutaredoxin-like thiol disulfide exchange reactions with reduced glutathione as electron donor. Can insert into membranes and form voltage-dependent chloride-selective channels. The channel opens upon membrane depolarization at positive voltages and closes at negative membrane voltages. May play a critical role in water-secreting cells, possibly through the regulation of chloride ion transport. This Rattus norvegicus (Rat) protein is Chloride intracellular channel protein 6 (Clic6).